Here is a 78-residue protein sequence, read N- to C-terminus: uncharacterized protein (78 aa).

This is an uncharacterized protein from Plasmodium falciparum (isolate fcm17 / Senegal).